We begin with the raw amino-acid sequence, 172 residues long: Translocon-associated protein subunit delta (172 aa).

The N-terminal stretch at 1 to 24 (MAALASLGALALLLLSGLSCCSEA) is a signal peptide. The cysteines at positions 25 and 56 are disulfide-linked. The Lumenal segment spans residues 25-143 (CVEPQITPSY…SVDHRGTWNG (119 aa)). Lysine 72 participates in a covalent cross-link: Glycyl lysine isopeptide (Lys-Gly) (interchain with G-Cter in ubiquitin). The helical transmembrane segment at 144–164 (PWVSTEVLAAAIGLVIYYLAF) threads the bilayer. Topologically, residues 165–172 (SAKSHIQA) are cytoplasmic.

Belongs to the TRAP-delta family. In terms of assembly, heterotetramer of TRAP-alpha, TRAP-beta, TRAP-delta and TRAP-gamma.

Its subcellular location is the endoplasmic reticulum membrane. Its function is as follows. TRAP proteins are part of a complex whose function is to bind calcium to the ER membrane and thereby regulate the retention of ER resident proteins. The protein is Translocon-associated protein subunit delta (SSR4) of Bos taurus (Bovine).